The sequence spans 600 residues: E3 ubiquitin-protein ligase RLIM (600 aa).

Residue Met1 is modified to N-acetylmethionine. Residues 1-11 show a composition bias toward basic and acidic residues; sequence MENSDSNDKGS. Disordered stretches follow at residues 1 to 24, 49 to 355, and 417 to 497; these read MENSDSNDKGSDQSAAQRRSQMDR, NNLL…ERGG, and SDSE…VTFD. Composition is skewed to polar residues over residues 103–131 and 140–152; these read SVRQTGNTTRSGQRGNQSWRAVSRTNPNS and INVNRNNGSQTSE. Residue Ser163 is modified to Phosphoserine. Residues 166-175 show a composition bias toward polar residues; that stretch reads NMESSSQRQM. The segment covering 176-187 has biased composition (low complexity); it reads ENSASESASARP. Phosphoserine is present on residues Ser194, Ser227, and Ser229. Over residues 213–228 the composition is skewed to basic and acidic residues; that stretch reads RSPEHRRTRARAERSR. Over residues 244–255 the composition is skewed to polar residues; that stretch reads LEQSSENEPEGS. At Ser269 the chain carries Phosphoserine. Positions 288 to 306 are enriched in low complexity; that stretch reads SQGTSSSDTGSNSESSGSG. A compositionally biased stretch (basic and acidic residues) spans 322–332; it reads RPGEYRQRDSI. Residues 333-349 show a composition bias toward polar residues; the sequence is ASRTRSRSQAPNNTVTY. The span at 448 to 475 shows a compositional bias: low complexity; it reads SGSSSSSSPSPSSSGESSESSSEMFEGS. Residues 546 to 587 form an RING-type zinc finger; it reads CSVCITEYTEGNKLRKLPCSHEYHVHCIDRWLSENSTCPICR. The PDZ-binding signature appears at 597–600; the sequence is ESVV.

It belongs to the RNF12 family. Interacts (via N-terminus) with TERF1. Interacts (via C-terminus) with ESR1. Interacts with LIM/homeobox factors such as LHX3. Interacts with LDB1, LDB2 and SIN3A. Interacts with LIMK1.

The protein resides in the nucleus. The catalysed reaction is S-ubiquitinyl-[E2 ubiquitin-conjugating enzyme]-L-cysteine + [acceptor protein]-L-lysine = [E2 ubiquitin-conjugating enzyme]-L-cysteine + N(6)-ubiquitinyl-[acceptor protein]-L-lysine.. It functions in the pathway protein modification; protein ubiquitination. Functionally, E3 ubiquitin-protein ligase that acts as a negative coregulator for LIM homeodomain transcription factors by mediating the ubiquitination and subsequent degradation of LIM cofactors LDB1 and LDB2 and by mediating the recruitment the SIN3a/histone deacetylase corepressor complex. Ubiquitination and degradation of LIM cofactors LDB1 and LDB2 allows DNA-bound LIM homeodomain transcription factors to interact with other protein partners such as RLIM. Plays a role in telomere length-mediated growth suppression by mediating the ubiquitination and degradation of TERF1. By targeting ZFP42 for degradation, acts as an activator of random inactivation of X chromosome in the embryo, a stochastic process in which one X chromosome is inactivated to minimize sex-related dosage differences of X-encoded genes in somatic cells of female placental mammals. This chain is E3 ubiquitin-protein ligase RLIM (Rlim), found in Mus musculus (Mouse).